Reading from the N-terminus, the 374-residue chain is Chaperone protein DnaJ (374 aa).

A J domain is found at 5 to 70; sequence CYYEILNVSK…GKRSRYDQFG (66 aa). The segment at 130–207 adopts a CR-type zinc-finger fold; that stretch reads GVEKEINIPR…CYGSGKIKKQ (78 aa). Zn(2+) contacts are provided by Cys-143, Cys-146, Cys-159, Cys-162, Cys-181, Cys-184, Cys-195, and Cys-198. CXXCXGXG motif repeat units follow at residues 143–150, 159–166, 181–188, and 195–202; these read CDSCDGTG, CHACHGQG, CPVCNGTG, and CDDCYGSG.

The protein belongs to the DnaJ family. As to quaternary structure, homodimer. It depends on Zn(2+) as a cofactor.

It is found in the cytoplasm. Participates actively in the response to hyperosmotic and heat shock by preventing the aggregation of stress-denatured proteins and by disaggregating proteins, also in an autonomous, DnaK-independent fashion. Unfolded proteins bind initially to DnaJ; upon interaction with the DnaJ-bound protein, DnaK hydrolyzes its bound ATP, resulting in the formation of a stable complex. GrpE releases ADP from DnaK; ATP binding to DnaK triggers the release of the substrate protein, thus completing the reaction cycle. Several rounds of ATP-dependent interactions between DnaJ, DnaK and GrpE are required for fully efficient folding. Also involved, together with DnaK and GrpE, in the DNA replication of plasmids through activation of initiation proteins. This Francisella philomiragia subsp. philomiragia (strain ATCC 25017 / CCUG 19701 / FSC 153 / O#319-036) protein is Chaperone protein DnaJ.